The following is a 144-amino-acid chain: D-aminoacyl-tRNA deacylase (144 aa).

The Gly-cisPro motif, important for rejection of L-amino acids motif lies at 136-137 (GP).

It belongs to the DTD family. As to quaternary structure, homodimer.

The protein resides in the cytoplasm. The catalysed reaction is glycyl-tRNA(Ala) + H2O = tRNA(Ala) + glycine + H(+). It catalyses the reaction a D-aminoacyl-tRNA + H2O = a tRNA + a D-alpha-amino acid + H(+). Functionally, an aminoacyl-tRNA editing enzyme that deacylates mischarged D-aminoacyl-tRNAs. Also deacylates mischarged glycyl-tRNA(Ala), protecting cells against glycine mischarging by AlaRS. Acts via tRNA-based rather than protein-based catalysis; rejects L-amino acids rather than detecting D-amino acids in the active site. By recycling D-aminoacyl-tRNA to D-amino acids and free tRNA molecules, this enzyme counteracts the toxicity associated with the formation of D-aminoacyl-tRNA entities in vivo and helps enforce protein L-homochirality. This Aliivibrio fischeri (strain MJ11) (Vibrio fischeri) protein is D-aminoacyl-tRNA deacylase.